A 240-amino-acid chain; its full sequence is DNA repair protein RecO (240 aa).

It belongs to the RecO family.

In terms of biological role, involved in DNA repair and RecF pathway recombination. The sequence is that of DNA repair protein RecO from Actinobacillus pleuropneumoniae serotype 3 (strain JL03).